The sequence spans 607 residues: MCGIIGIIGNDEVAPRLVDALKRLEYRGYDSAGIATLQNGRLDRRRAEGKLVNLEKRLAGEPLPGVIGIGHTRWATHGRPVEHNAHPHITTRLAVVHNGIIENFAELRAMLEAEGRKFETETDTEAVAHLVTRELEKGKSPVEAVRDCLPHLKGAFALAFLFEGDEELLIGARQGPPLAVGYGEGEMFLGSDAIALAPFTDTISYLEDGDWAVLTRNGVSIYDENNKPVERPVQKSQNTNMLVSKGNHRHFMQKEMFEQPEVISHTLANYLDFTTGKVRKEAIGIDFSKVDRLTITACGTAYYAATVAKYWFEQIARLPVDSDIASEFRYREMPLSKDSLAMFVSQSGETADTLASLRYCKAQGLKIASVVNVTGSTIARESDAVFPTLAGPEIGVASTKAFTCQLSAMASLAIAAARARGAIDEVREQELVHQLSEAPRFINQVLKLEDQIAAVCHDLSKVNHVLYLGRGTSFPLAMEGALKLKEISYIHAEGYAAGELKHGPIALIDETMPVIVIAPSDRLYEKTVSNMQEVAARGGRIILITDKKGAESASIDTMATIVLPEVPEFISPLVYALPIQMLAYHTAVLMGTDVDQPRNLAKSVTVE.

Cysteine 2 functions as the Nucleophile; for GATase activity in the catalytic mechanism. Positions 2–217 (CGIIGIIGND…DGDWAVLTRN (216 aa)) constitute a Glutamine amidotransferase type-2 domain. SIS domains lie at 283-422 (IGID…ARGA) and 455-597 (VCHD…VDQP). Lysine 602 functions as the For Fru-6P isomerization activity in the catalytic mechanism.

Homodimer.

It localises to the cytoplasm. The enzyme catalyses D-fructose 6-phosphate + L-glutamine = D-glucosamine 6-phosphate + L-glutamate. In terms of biological role, catalyzes the first step in hexosamine metabolism, converting fructose-6P into glucosamine-6P using glutamine as a nitrogen source. The polypeptide is Glutamine--fructose-6-phosphate aminotransferase [isomerizing] (Brucella abortus biovar 1 (strain 9-941)).